We begin with the raw amino-acid sequence, 23 residues long: Unknown protein NF005 from 2D-PAGE (23 aa).

The disordered stretch occupies residues Ala1 to Asp23. Residues Ser9–Asp23 are compositionally biased toward basic and acidic residues.

This Naegleria fowleri (Brain eating amoeba) protein is Unknown protein NF005 from 2D-PAGE.